Reading from the N-terminus, the 288-residue chain is Homoserine kinase (288 aa).

P79–A89 lines the ATP pocket.

Belongs to the GHMP kinase family. Homoserine kinase subfamily.

It is found in the cytoplasm. It carries out the reaction L-homoserine + ATP = O-phospho-L-homoserine + ADP + H(+). It functions in the pathway amino-acid biosynthesis; L-threonine biosynthesis; L-threonine from L-aspartate: step 4/5. Its function is as follows. Catalyzes the ATP-dependent phosphorylation of L-homoserine to L-homoserine phosphate. This Listeria monocytogenes serotype 4b (strain F2365) protein is Homoserine kinase.